Consider the following 349-residue polypeptide: Galactose-1-phosphate uridylyltransferase (349 aa).

29–32 (RAKR) provides a ligand contact to UDP-alpha-D-glucose. Zn(2+) contacts are provided by Cys-53 and Cys-56. 78-79 (ND) serves as a coordination point for UDP-alpha-D-glucose. His-116 contacts Zn(2+). Residues Asn-154 and 160–162 (GCS) each bind UDP-alpha-D-glucose. His-165 contributes to the Zn(2+) binding site. His-167 acts as the Tele-UMP-histidine intermediate in catalysis. UDP-alpha-D-glucose is bound at residue Gln-169. Fe cation contacts are provided by Glu-183, His-282, His-297, and His-299. UDP-alpha-D-glucose-binding positions include 312 to 313 (KF), 317 to 318 (YE), and Gln-324.

This sequence belongs to the galactose-1-phosphate uridylyltransferase type 1 family. Requires Zn(2+) as cofactor.

It catalyses the reaction alpha-D-galactose 1-phosphate + UDP-alpha-D-glucose = alpha-D-glucose 1-phosphate + UDP-alpha-D-galactose. The protein operates within carbohydrate metabolism; galactose metabolism. In Haemophilus influenzae (strain ATCC 51907 / DSM 11121 / KW20 / Rd), this protein is Galactose-1-phosphate uridylyltransferase (galT).